Here is a 76-residue protein sequence, read N- to C-terminus: Exodeoxyribonuclease 7 small subunit (76 aa).

This sequence belongs to the XseB family. Heterooligomer composed of large and small subunits.

It is found in the cytoplasm. It carries out the reaction Exonucleolytic cleavage in either 5'- to 3'- or 3'- to 5'-direction to yield nucleoside 5'-phosphates.. In terms of biological role, bidirectionally degrades single-stranded DNA into large acid-insoluble oligonucleotides, which are then degraded further into small acid-soluble oligonucleotides. In Legionella pneumophila subsp. pneumophila (strain Philadelphia 1 / ATCC 33152 / DSM 7513), this protein is Exodeoxyribonuclease 7 small subunit.